A 279-amino-acid chain; its full sequence is Ribosomal RNA small subunit methyltransferase J (279 aa).

S-adenosyl-L-methionine contacts are provided by residues 138 to 139 and Asp-194; that span reads ER.

It belongs to the methyltransferase superfamily. RsmJ family.

The protein resides in the cytoplasm. It carries out the reaction guanosine(1516) in 16S rRNA + S-adenosyl-L-methionine = N(2)-methylguanosine(1516) in 16S rRNA + S-adenosyl-L-homocysteine + H(+). Specifically methylates the guanosine in position 1516 of 16S rRNA. This Acinetobacter baumannii (strain AYE) protein is Ribosomal RNA small subunit methyltransferase J.